Reading from the N-terminus, the 300-residue chain is Glycine--tRNA ligase alpha subunit (300 aa).

Belongs to the class-II aminoacyl-tRNA synthetase family. In terms of assembly, tetramer of two alpha and two beta subunits.

It localises to the cytoplasm. It catalyses the reaction tRNA(Gly) + glycine + ATP = glycyl-tRNA(Gly) + AMP + diphosphate. The protein is Glycine--tRNA ligase alpha subunit of Pseudoalteromonas translucida (strain TAC 125).